A 521-amino-acid polypeptide reads, in one-letter code: Hyccin (521 aa).

Residue T306 is modified to Phosphothreonine. S321 bears the Phosphoserine mark. A compositionally biased stretch (low complexity) spans A355–N373. The segment at A355–A413 is disordered. Positions G390 to A406 are enriched in basic and acidic residues. 5 positions are modified to phosphoserine: S415, S422, S433, S453, and S465.

The protein belongs to the Hyccin family. Component of a phosphatidylinositol 4-kinase (PI4K) complex, composed of PI4KA, EFR3 (EFR3A or EFR3B), TTC7 (TTC7A or TTC7B) and HYCC (HYCC1 or HYCC2). Interacts with TTC7 (TTC7A or TTC7B), interaction is direct. In terms of tissue distribution, predominantly expressed in the central nervous system, where it is found in neurons but not in myelinating cells. Lower abundance is observed in peripheral neurons, where it is detectable only at early postnatal ages. Expressed in both oligodendrocytes and neurons.

Its subcellular location is the cytoplasm. It localises to the cytosol. It is found in the cell membrane. Its function is as follows. Component of a complex required to localize phosphatidylinositol 4-kinase (PI4K) to the plasma membrane. The complex acts as a regulator of phosphatidylinositol 4-phosphate (PtdIns(4)P) synthesis. HYCC1 plays a key role in oligodendrocytes formation, a cell type with expanded plasma membrane that requires generation of PtdIns(4)P. Its role in oligodendrocytes formation probably explains its importance in myelination of the central and peripheral nervous system. May also have a role in the beta-catenin/Lef signaling pathway. This Mus musculus (Mouse) protein is Hyccin (Hycc1).